The following is a 255-amino-acid chain: MIRIKTPEQIDGIRASCKALARLFDVLIPLVKPGVQTQELDAFCQRFIRSVGGVPAWFSEGFPAAACISINEEVIHGLPSARVIQDGDLVSLDVGINLNGYISDACRTVPVGGVAHERLELLRVTTECLRAGIKACRAGARVRAVSRAVYAVAARHRFGVVYEYCGHGVGLAVHEEPNIPNVPGLEGPNPRFLPGMVVAIEPMLTLGTDEVRTSADGWTVVTADGSCACHVEHTVAVFADHTEVLTEPTEVERTG.

Residue H76 coordinates substrate. A divalent metal cation contacts are provided by D93, D104, and H167. Position 174 (H174) interacts with substrate. 2 residues coordinate a divalent metal cation: E201 and E232.

This sequence belongs to the peptidase M24A family. Methionine aminopeptidase type 1 subfamily. In terms of assembly, monomer. It depends on Co(2+) as a cofactor. Requires Zn(2+) as cofactor. The cofactor is Mn(2+). Fe(2+) is required as a cofactor.

The catalysed reaction is Release of N-terminal amino acids, preferentially methionine, from peptides and arylamides.. Its function is as follows. Removes the N-terminal methionine from nascent proteins. The N-terminal methionine is often cleaved when the second residue in the primary sequence is small and uncharged (Met-Ala-, Cys, Gly, Pro, Ser, Thr, or Val). Requires deformylation of the N(alpha)-formylated initiator methionine before it can be hydrolyzed. This Treponema pallidum (strain Nichols) protein is Methionine aminopeptidase.